We begin with the raw amino-acid sequence, 419 residues long: Protein FAM217A (419 aa).

Disordered regions lie at residues 1-60 (MGRK…LENP), 96-119 (KGST…DLSE), 236-299 (SSSK…SRAL), and 317-382 (KNSK…RTKK). Residues 7 to 19 (ESCSSSLHVSSIS) show a composition bias toward low complexity. Positions 236–251 (SSSKAIATKAKAPKIP) are enriched in low complexity. Polar residues-rich tracts occupy residues 252 to 261 (ETSTLQTSGV) and 271 to 281 (NSGSGKPEQNV). Composition is skewed to low complexity over residues 282–296 (SKWS…KSNS) and 334–345 (PTTTTQATQPMA).

This sequence belongs to the FAM217 family.

This chain is Protein FAM217A (Fam217a), found in Mus musculus (Mouse).